Reading from the N-terminus, the 342-residue chain is Farnesyl pyrophosphate synthase 1 (342 aa).

Residues Lys-47, Arg-50, and Gln-86 each coordinate isopentenyl diphosphate. Residues Asp-93 and Asp-97 each coordinate Mg(2+). Position 102 (Arg-102) interacts with dimethylallyl diphosphate. Arg-103 is an isopentenyl diphosphate binding site. Residues Lys-190, Thr-191, Gln-229, Lys-246, and Lys-255 each contribute to the dimethylallyl diphosphate site.

This sequence belongs to the FPP/GGPP synthase family. Requires Mg(2+) as cofactor.

The protein resides in the cytoplasm. The catalysed reaction is isopentenyl diphosphate + dimethylallyl diphosphate = (2E)-geranyl diphosphate + diphosphate. It catalyses the reaction isopentenyl diphosphate + (2E)-geranyl diphosphate = (2E,6E)-farnesyl diphosphate + diphosphate. It functions in the pathway isoprenoid biosynthesis; farnesyl diphosphate biosynthesis; farnesyl diphosphate from geranyl diphosphate and isopentenyl diphosphate: step 1/1. Its pathway is isoprenoid biosynthesis; geranyl diphosphate biosynthesis; geranyl diphosphate from dimethylallyl diphosphate and isopentenyl diphosphate: step 1/1. Its function is as follows. Catalyzes the sequential condensation of isopentenyl pyrophosphate with the allylic pyrophosphates, dimethylallyl pyrophosphate, and then with the resultant geranylpyrophosphate to the ultimate product farnesyl pyrophosphate. In Lupinus albus (White lupine), this protein is Farnesyl pyrophosphate synthase 1 (FPS1).